Here is a 113-residue protein sequence, read N- to C-terminus: Putative increased recombination centers protein 14 (113 aa).

The chain is Putative increased recombination centers protein 14 (IRC14) from Saccharomyces cerevisiae (strain ATCC 204508 / S288c) (Baker's yeast).